A 485-amino-acid chain; its full sequence is Adenosylhomocysteinase (485 aa).

Positions 64, 139, and 205 each coordinate substrate. 206–208 (TTT) is a binding site for NAD(+). Substrate contacts are provided by Lys-235 and Asp-239. NAD(+) is bound by residues Asn-240, 269–274 (GYGDVG), Glu-292, Asn-327, 348–350 (IGH), and Asn-397.

The protein belongs to the adenosylhomocysteinase family. NAD(+) serves as cofactor.

It catalyses the reaction S-adenosyl-L-homocysteine + H2O = L-homocysteine + adenosine. It functions in the pathway amino-acid biosynthesis; L-homocysteine biosynthesis; L-homocysteine from S-adenosyl-L-homocysteine: step 1/1. Adenosylhomocysteine is a competitive inhibitor of S-adenosyl-L-methionine-dependent methyl transferase reactions; therefore adenosylhomocysteinase may play a key role in the control of methylations via regulation of the intracellular concentration of adenosylhomocysteine. The chain is Adenosylhomocysteinase (SAHH) from Solanum lycopersicum (Tomato).